The primary structure comprises 562 residues: NAD-dependent malic enzyme (562 aa).

Tyr101 serves as the catalytic Proton donor. An NAD(+)-binding site is contributed by Arg154. Lys172 functions as the Proton acceptor in the catalytic mechanism. 3 residues coordinate a divalent metal cation: Glu243, Asp244, and Asp267. Positions 267 and 415 each coordinate NAD(+).

Belongs to the malic enzymes family. In terms of assembly, homotetramer. Mg(2+) serves as cofactor. It depends on Mn(2+) as a cofactor.

The catalysed reaction is (S)-malate + NAD(+) = pyruvate + CO2 + NADH. The enzyme catalyses oxaloacetate + H(+) = pyruvate + CO2. This chain is NAD-dependent malic enzyme, found in Shewanella loihica (strain ATCC BAA-1088 / PV-4).